Reading from the N-terminus, the 430-residue chain is Bifunctional protein GlmU (430 aa).

Positions 1–223 are pyrophosphorylase; that stretch reads MSFSVVILAA…KNEFQGVNSK (223 aa). Residues 8-11, Lys-22, and 81-82 each bind UDP-N-acetyl-alpha-D-glucosamine; these read LAAG and GT. Mg(2+) is bound at residue Asp-102. The UDP-N-acetyl-alpha-D-glucosamine site is built by Gly-135, Glu-149, Asn-164, and Asn-221. Mg(2+) is bound at residue Asn-221. Residues 224 to 244 are linker; the sequence is YDLANAEIVMQDRIKRHWMQQ. Positions 245–430 are N-acetyltransferase; that stretch reads GVIMRLPQTI…DFYYKFFGKN (186 aa). 2 residues coordinate UDP-N-acetyl-alpha-D-glucosamine: Arg-308 and Lys-325. His-336 (proton acceptor) is an active-site residue. 2 residues coordinate UDP-N-acetyl-alpha-D-glucosamine: Tyr-339 and Asn-350. Acetyl-CoA-binding positions include Ala-353, 359-360, Ser-378, Ala-396, and Arg-413; that span reads NY.

It in the N-terminal section; belongs to the N-acetylglucosamine-1-phosphate uridyltransferase family. In the C-terminal section; belongs to the transferase hexapeptide repeat family. As to quaternary structure, homotrimer. Mg(2+) serves as cofactor.

The protein localises to the cytoplasm. The catalysed reaction is alpha-D-glucosamine 1-phosphate + acetyl-CoA = N-acetyl-alpha-D-glucosamine 1-phosphate + CoA + H(+). It carries out the reaction N-acetyl-alpha-D-glucosamine 1-phosphate + UTP + H(+) = UDP-N-acetyl-alpha-D-glucosamine + diphosphate. It participates in nucleotide-sugar biosynthesis; UDP-N-acetyl-alpha-D-glucosamine biosynthesis; N-acetyl-alpha-D-glucosamine 1-phosphate from alpha-D-glucosamine 6-phosphate (route II): step 2/2. It functions in the pathway nucleotide-sugar biosynthesis; UDP-N-acetyl-alpha-D-glucosamine biosynthesis; UDP-N-acetyl-alpha-D-glucosamine from N-acetyl-alpha-D-glucosamine 1-phosphate: step 1/1. Its pathway is bacterial outer membrane biogenesis; LPS lipid A biosynthesis. Functionally, catalyzes the last two sequential reactions in the de novo biosynthetic pathway for UDP-N-acetylglucosamine (UDP-GlcNAc). The C-terminal domain catalyzes the transfer of acetyl group from acetyl coenzyme A to glucosamine-1-phosphate (GlcN-1-P) to produce N-acetylglucosamine-1-phosphate (GlcNAc-1-P), which is converted into UDP-GlcNAc by the transfer of uridine 5-monophosphate (from uridine 5-triphosphate), a reaction catalyzed by the N-terminal domain. This is Bifunctional protein GlmU from Nitratiruptor sp. (strain SB155-2).